Here is a 362-residue protein sequence, read N- to C-terminus: Protein-glutamate methylesterase/protein-glutamine glutaminase 5 (362 aa).

One can recognise a Response regulatory domain in the interval 13–130; that stretch reads RVLVVDDSAL…RRFLEESRVR (118 aa). Aspartate 64 bears the 4-aspartylphosphate mark. One can recognise a CheB-type methylesterase domain in the interval 172–362; it reads LQTTERVVVV…IPPELLRLCR (191 aa). Active-site residues include serine 184, histidine 210, and aspartate 306.

It belongs to the CheB family. Post-translationally, phosphorylated by CheA. Phosphorylation of the N-terminal regulatory domain activates the methylesterase activity.

It localises to the cytoplasm. The catalysed reaction is [protein]-L-glutamate 5-O-methyl ester + H2O = L-glutamyl-[protein] + methanol + H(+). The enzyme catalyses L-glutaminyl-[protein] + H2O = L-glutamyl-[protein] + NH4(+). Functionally, involved in chemotaxis. Part of a chemotaxis signal transduction system that modulates chemotaxis in response to various stimuli. Catalyzes the demethylation of specific methylglutamate residues introduced into the chemoreceptors (methyl-accepting chemotaxis proteins or MCP) by CheR. Also mediates the irreversible deamidation of specific glutamine residues to glutamic acid. The protein is Protein-glutamate methylesterase/protein-glutamine glutaminase 5 of Anaeromyxobacter dehalogenans (strain 2CP-C).